We begin with the raw amino-acid sequence, 266 residues long: Protein crossbronx-like (266 aa).

The 164-residue stretch at 15-178 (KQGYHILAEY…VQEQAIASRN (164 aa)) folds into the UBC core domain.

The protein belongs to the ubiquitin-conjugating enzyme family. FTS subfamily.

The sequence is that of Protein crossbronx-like from Drosophila erecta (Fruit fly).